The following is a 432-amino-acid chain: Ribosomal protein uS12 methylthiotransferase RimO (432 aa).

An MTTase N-terminal domain is found at 4–120 (HNVFLLSLGC…LLQAIGAQYR (117 aa)). The [4Fe-4S] cluster site is built by C13, C49, C83, C144, C148, and C151. Positions 130–359 (LTPPHISYLK…MELQETIAKE (230 aa)) constitute a Radical SAM core domain. Residues 362–429 (QLFEGKELTV…AYELHGTITA (68 aa)) form the TRAM domain.

It belongs to the methylthiotransferase family. RimO subfamily. [4Fe-4S] cluster is required as a cofactor.

The protein localises to the cytoplasm. The catalysed reaction is L-aspartate(89)-[ribosomal protein uS12]-hydrogen + (sulfur carrier)-SH + AH2 + 2 S-adenosyl-L-methionine = 3-methylsulfanyl-L-aspartate(89)-[ribosomal protein uS12]-hydrogen + (sulfur carrier)-H + 5'-deoxyadenosine + L-methionine + A + S-adenosyl-L-homocysteine + 2 H(+). Catalyzes the methylthiolation of an aspartic acid residue of ribosomal protein uS12. The chain is Ribosomal protein uS12 methylthiotransferase RimO from Chlorobium phaeobacteroides (strain DSM 266 / SMG 266 / 2430).